The chain runs to 163 residues: ATP synthase subunit b (163 aa).

Residues 1-21 (MISFNLTSIVNLVGFLAFMFL) traverse the membrane as a helical segment.

It belongs to the ATPase B chain family. F-type ATPases have 2 components, F(1) - the catalytic core - and F(0) - the membrane proton channel. F(1) has five subunits: alpha(3), beta(3), gamma(1), delta(1), epsilon(1). F(0) has three main subunits: a(1), b(2) and c(10-14). The alpha and beta chains form an alternating ring which encloses part of the gamma chain. F(1) is attached to F(0) by a central stalk formed by the gamma and epsilon chains, while a peripheral stalk is formed by the delta and b chains.

Its subcellular location is the cell inner membrane. F(1)F(0) ATP synthase produces ATP from ADP in the presence of a proton or sodium gradient. F-type ATPases consist of two structural domains, F(1) containing the extramembraneous catalytic core and F(0) containing the membrane proton channel, linked together by a central stalk and a peripheral stalk. During catalysis, ATP synthesis in the catalytic domain of F(1) is coupled via a rotary mechanism of the central stalk subunits to proton translocation. In terms of biological role, component of the F(0) channel, it forms part of the peripheral stalk, linking F(1) to F(0). The chain is ATP synthase subunit b from Petrotoga mobilis (strain DSM 10674 / SJ95).